The chain runs to 339 residues: Probable geranylgeranyl transferase type-2 subunit beta (339 aa).

PFTB repeat units follow at residues 24 to 65 (IDKH…YLLK), 72 to 113 (KNEV…IQYD), 120 to 161 (INSV…SLLK), 168 to 209 (CEKA…SILN), 216 to 257 (IDKL…SAID), and 264 to 306 (NDKL…SLMG). Geranylgeranyl diphosphate contacts are provided by residues 194 to 196 (HAG) and 236 to 248 (RPEK…YSWW). The Zn(2+) site is built by Asp242, Cys244, and His294.

It belongs to the protein prenyltransferase subunit beta family. As to quaternary structure, heterodimer of an alpha and a beta subunit. Zn(2+) serves as cofactor.

It carries out the reaction geranylgeranyl diphosphate + L-cysteinyl-[protein] = S-geranylgeranyl-L-cysteinyl-[protein] + diphosphate. Its function is as follows. Catalyzes the transfer of a geranyl-geranyl moiety from geranyl-geranyl pyrophosphate to both cysteines in Rab proteins with an -XXCC, -XCXC and -CCXX C-terminal. The sequence is that of Probable geranylgeranyl transferase type-2 subunit beta (rabggtb) from Dictyostelium discoideum (Social amoeba).